The sequence spans 149 residues: SsrA-binding protein (149 aa).

A disordered region spans residues 121–149; it reads GKKQHDKRADELDKDSKREAQRAMKERQR. Over residues 127-149 the composition is skewed to basic and acidic residues; the sequence is KRADELDKDSKREAQRAMKERQR.

Belongs to the SmpB family.

The protein resides in the cytoplasm. Functionally, required for rescue of stalled ribosomes mediated by trans-translation. Binds to transfer-messenger RNA (tmRNA), required for stable association of tmRNA with ribosomes. tmRNA and SmpB together mimic tRNA shape, replacing the anticodon stem-loop with SmpB. tmRNA is encoded by the ssrA gene; the 2 termini fold to resemble tRNA(Ala) and it encodes a 'tag peptide', a short internal open reading frame. During trans-translation Ala-aminoacylated tmRNA acts like a tRNA, entering the A-site of stalled ribosomes, displacing the stalled mRNA. The ribosome then switches to translate the ORF on the tmRNA; the nascent peptide is terminated with the 'tag peptide' encoded by the tmRNA and targeted for degradation. The ribosome is freed to recommence translation, which seems to be the essential function of trans-translation. This Dechloromonas aromatica (strain RCB) protein is SsrA-binding protein.